The following is a 790-amino-acid chain: LPS-assembly protein LptD (790 aa).

Residues 1-20 (MRMLRWLILSAFSVAGAVQA) form the signal peptide.

The protein belongs to the LptD family. In terms of assembly, component of the lipopolysaccharide transport and assembly complex. Interacts with LptE and LptA.

Its subcellular location is the cell outer membrane. In terms of biological role, together with LptE, is involved in the assembly of lipopolysaccharide (LPS) at the surface of the outer membrane. In Bordetella pertussis (strain Tohama I / ATCC BAA-589 / NCTC 13251), this protein is LPS-assembly protein LptD.